Reading from the N-terminus, the 458-residue chain is Exodeoxyribonuclease 7 large subunit (458 aa).

It belongs to the XseA family. Heterooligomer composed of large and small subunits.

Its subcellular location is the cytoplasm. It carries out the reaction Exonucleolytic cleavage in either 5'- to 3'- or 3'- to 5'-direction to yield nucleoside 5'-phosphates.. Bidirectionally degrades single-stranded DNA into large acid-insoluble oligonucleotides, which are then degraded further into small acid-soluble oligonucleotides. The protein is Exodeoxyribonuclease 7 large subunit of Shouchella clausii (strain KSM-K16) (Alkalihalobacillus clausii).